We begin with the raw amino-acid sequence, 147 residues long: Nucleoside diphosphate kinase (147 aa).

ATP-binding residues include Lys9, Phe57, Arg85, Thr91, Arg102, and Asn112. His115 (pros-phosphohistidine intermediate) is an active-site residue.

It belongs to the NDK family. As to quaternary structure, homotetramer. Requires Mg(2+) as cofactor.

Its subcellular location is the cytoplasm. It catalyses the reaction a 2'-deoxyribonucleoside 5'-diphosphate + ATP = a 2'-deoxyribonucleoside 5'-triphosphate + ADP. The enzyme catalyses a ribonucleoside 5'-diphosphate + ATP = a ribonucleoside 5'-triphosphate + ADP. In terms of biological role, major role in the synthesis of nucleoside triphosphates other than ATP. The ATP gamma phosphate is transferred to the NDP beta phosphate via a ping-pong mechanism, using a phosphorylated active-site intermediate. The protein is Nucleoside diphosphate kinase of Listeria monocytogenes serotype 4a (strain HCC23).